The sequence spans 757 residues: Probable serine/threonine-protein kinase pknA2 (757 aa).

The Protein kinase domain maps to 14–274; that stretch reads YRIVRNIAEG…DGAAAAEELS (261 aa). ATP-binding positions include 20 to 28 and Lys43; that span reads IAEGGMATV. Asp140 acts as the Proton acceptor in catalysis. Residues 344–387 are disordered; sequence DTGGAADVNPPAPPVAPTTALDSSTPADASAPHKTQIMAQSGSE. PASTA domains are found at residues 466–539, 545–614, and 615–681; these read DANA…VVSK, TIPK…TLSK, and GPMP…VISK.

This sequence belongs to the protein kinase superfamily. Ser/Thr protein kinase family.

It catalyses the reaction L-seryl-[protein] + ATP = O-phospho-L-seryl-[protein] + ADP + H(+). It carries out the reaction L-threonyl-[protein] + ATP = O-phospho-L-threonyl-[protein] + ADP + H(+). In Bifidobacterium longum (strain NCC 2705), this protein is Probable serine/threonine-protein kinase pknA2 (pknA2).